The sequence spans 350 residues: MAAASFITSLVTRLLRSAQSGRLHQRPFHLSAVRNEAVVISGRKLAEQIKQEVRQEVEEWVASGNKRPHLSVVLVGENPASQSYVLNKTRAAASVGINSETILKPASISEEELLNLINKLNNDDNVDGLLVQLPLPEHIDERKVCNAVSPDKDVDGFHVINVGRMCLDQCSMLPATPWGVWEIIKRTGIPTLGKNVVVAGRSKNVGMPIAMLLHTDGAHERPGGDATVTISHRYTPKEELKKHTALADIVISAAGIPNLITADMIKEGAAVIDVGINRIQDPITAKPKLVGDVDFEGVKKKAGYITPVPGGVGPMTVAMLMKNTIIAAKKVLRLEEQEVLKSKELGVASN.

Residues 1 to 35 (MAAASFITSLVTRLLRSAQSGRLHQRPFHLSAVRN) constitute a mitochondrion transit peptide. Lys50 bears the N6-acetyllysine; alternate mark. Lys50 participates in a covalent cross-link: Glycyl lysine isopeptide (Lys-Gly) (interchain with G-Cter in SUMO2); alternate. Residues 84–88 (YVLNK) and 131–133 (VQL) each bind substrate. NAD(+) is bound by residues 200–202 (GRS) and Arg233. 309–313 (PGGVG) contacts substrate.

The protein belongs to the tetrahydrofolate dehydrogenase/cyclohydrolase family. In terms of assembly, homodimer. The cofactor is Mg(2+).

Its subcellular location is the mitochondrion. The enzyme catalyses (6R)-5,10-methylene-5,6,7,8-tetrahydrofolate + NAD(+) = (6R)-5,10-methenyltetrahydrofolate + NADH. The catalysed reaction is (6R)-5,10-methenyltetrahydrofolate + H2O = (6R)-10-formyltetrahydrofolate + H(+). Although its dehydrogenase activity is NAD-specific, it can also utilize NADP at a reduced efficiency. This is Bifunctional methylenetetrahydrofolate dehydrogenase/cyclohydrolase, mitochondrial (MTHFD2) from Bos taurus (Bovine).